Reading from the N-terminus, the 369-residue chain is MRLEAIRYSPGSLQILDQLQLPEHCHYETLSSVQQAREAIRAMKVRGAPAIALVGCLSLAVELQAGAGGPGLAALVAFVRDQLSLLVAARPTAVNMARAARDLTHMAAREAELEGATEETVRERVIRFAEDMLEKDLKDNRSIGDLGARHLLEQTNPRGGKVTVLTHCNTGALATAGYGTALGVIRSLHEMGRLEHTFCTETRPYNQGARLTAFELVYEKIPATLITDSMAAAAMVHQGVSAVVVGADRVVANGDTANKIGTYQLAIVAKHHGIPFYVAAPSSSCDLRLETGKEIVIEERPSQELTDLNGVRIAAQGIRVWNPAFDVTPHELITGGIITELGVFAPEELRAALSATIFSEGQTLDSPQM.

Residue methionine 1 is modified to N-acetylmethionine. An Omega-N-methylarginine modification is found at arginine 158. Aspartate 248 functions as the Proton donor in the catalytic mechanism. Phosphoserine is present on serine 366.

The protein belongs to the eIF-2B alpha/beta/delta subunits family. MtnA subfamily.

It is found in the cytoplasm. The protein localises to the nucleus. The enzyme catalyses 5-(methylsulfanyl)-alpha-D-ribose 1-phosphate = 5-(methylsulfanyl)-D-ribulose 1-phosphate. It participates in amino-acid biosynthesis; L-methionine biosynthesis via salvage pathway; L-methionine from S-methyl-5-thio-alpha-D-ribose 1-phosphate: step 1/6. In terms of biological role, catalyzes the interconversion of methylthioribose-1-phosphate (MTR-1-P) into methylthioribulose-1-phosphate (MTRu-1-P). The sequence is that of Methylthioribose-1-phosphate isomerase (Mri1) from Rattus norvegicus (Rat).